A 66-amino-acid chain; its full sequence is Large ribosomal subunit protein bL33c (66 aa).

Belongs to the bacterial ribosomal protein bL33 family.

The protein localises to the plastid. It localises to the chloroplast. The protein is Large ribosomal subunit protein bL33c of Cycas taitungensis (Prince sago).